A 359-amino-acid chain; its full sequence is Serine/threonine-protein kinase mos (359 aa).

Residues 63-336 form the Protein kinase domain; it reads VLLLEPLGSG…LLERLEQECA (274 aa). ATP-binding positions include 69–77 and lysine 90; that span reads LGSGGFGSV. Aspartate 189 functions as the Proton acceptor in the catalytic mechanism.

The protein belongs to the protein kinase superfamily. Ser/Thr protein kinase family.

The protein localises to the cytoplasm. The enzyme catalyses L-seryl-[protein] + ATP = O-phospho-L-seryl-[protein] + ADP + H(+). It catalyses the reaction L-threonyl-[protein] + ATP = O-phospho-L-threonyl-[protein] + ADP + H(+). Functionally, serine/threonine kinase involved in the regulation of MAPK signaling. In Xenopus laevis (African clawed frog), this protein is Serine/threonine-protein kinase mos (mos).